We begin with the raw amino-acid sequence, 100 residues long: Large ribosomal subunit protein uL23 (100 aa).

The protein belongs to the universal ribosomal protein uL23 family. Part of the 50S ribosomal subunit. Contacts protein L29, and trigger factor when it is bound to the ribosome.

Its function is as follows. One of the early assembly proteins it binds 23S rRNA. One of the proteins that surrounds the polypeptide exit tunnel on the outside of the ribosome. Forms the main docking site for trigger factor binding to the ribosome. This chain is Large ribosomal subunit protein uL23, found in Corynebacterium aurimucosum (strain ATCC 700975 / DSM 44827 / CIP 107346 / CN-1) (Corynebacterium nigricans).